The chain runs to 20 residues: Putative 60 kDa spermidine-binding protein (20 aa).

Positions 1 to 20 are disordered; it reads SXAAVVEPPETSQNRIAKGE. The segment covering 10–20 has biased composition (polar residues); that stretch reads ETSQNRIAKGE.

Dimer of 18 kDa and 60 kDa subunit.

The protein resides in the microsome membrane. It is found in the endoplasmic reticulum membrane. Its function is as follows. May have spermidine-binding activity. The sequence is that of Putative 60 kDa spermidine-binding protein from Zea mays (Maize).